The following is a 292-amino-acid chain: Feruloyl esterase B (292 aa).

A signal peptide spans 1–18; sequence MLPRTLLGLALTAATGLC. N-linked (GlcNAc...) asparagine glycosylation is found at N88, N117, N179, and N245.

It belongs to the carbohydrate esterase 1 (CE1) family. Feruloyl esterase type B subfamily.

Its subcellular location is the secreted. It catalyses the reaction feruloyl-polysaccharide + H2O = ferulate + polysaccharide.. Functionally, involved in degradation of plant cell walls. Hydrolyzes of the feruloyl-arabinose ester bond in arabinoxylans as well as the feruloyl-galactose and feruloyl-arabinose ester bonds in pectin. The sequence is that of Feruloyl esterase B (fae-1) from Neurospora crassa (strain ATCC 24698 / 74-OR23-1A / CBS 708.71 / DSM 1257 / FGSC 987).